Consider the following 196-residue polypeptide: MANILLLDNFDSFTYNLVEQLRNKNSNVLIYRNTVDINTILNSIKKIRNPILMLSPGPSTPKNAGCMLNLIKKVKGEIPIVGICLGHQAIVEAYGGIIGYAGEIFHGKASLINHDGLEMFEGLPQPLPVARYHSLICNKIPKNFIINSYFNDMIMSVRNNLDYVCGFQFHPESILTTSGALLLEKIINWASLKYKG.

One can recognise a Glutamine amidotransferase type-1 domain in the interval 3–196; that stretch reads NILLLDNFDS…INWASLKYKG (194 aa). L-glutamine is bound at residue 57 to 59; it reads GPS. Residue C84 is the Nucleophile; for GATase activity of the active site. Residues Q88 and 134-135 contribute to the L-glutamine site; that span reads SL. Residues H170 and E172 each act as for GATase activity in the active site.

In terms of assembly, heterotetramer consisting of two non-identical subunits: a beta subunit (TrpG) and a large alpha subunit (TrpE).

It carries out the reaction chorismate + L-glutamine = anthranilate + pyruvate + L-glutamate + H(+). It participates in amino-acid biosynthesis; L-tryptophan biosynthesis; L-tryptophan from chorismate: step 1/5. Its function is as follows. Part of a heterotetrameric complex that catalyzes the two-step biosynthesis of anthranilate, an intermediate in the biosynthesis of L-tryptophan. In the first step, the glutamine-binding beta subunit (TrpG) of anthranilate synthase (AS) provides the glutamine amidotransferase activity which generates ammonia as a substrate that, along with chorismate, is used in the second step, catalyzed by the large alpha subunit of AS (TrpE) to produce anthranilate. In the absence of TrpG, TrpE can synthesize anthranilate directly from chorismate and high concentrations of ammonia. This chain is Anthranilate synthase component 2 (trpG), found in Buchnera aphidicola subsp. Schizaphis graminum (strain Sg).